A 332-amino-acid polypeptide reads, in one-letter code: Ribosomal RNA small subunit methyltransferase H (332 aa).

Residues 36–38 (GGY), D54, F81, D102, and Q109 contribute to the S-adenosyl-L-methionine site.

It belongs to the methyltransferase superfamily. RsmH family.

It is found in the cytoplasm. It catalyses the reaction cytidine(1402) in 16S rRNA + S-adenosyl-L-methionine = N(4)-methylcytidine(1402) in 16S rRNA + S-adenosyl-L-homocysteine + H(+). In terms of biological role, specifically methylates the N4 position of cytidine in position 1402 (C1402) of 16S rRNA. The sequence is that of Ribosomal RNA small subunit methyltransferase H from Nitrobacter winogradskyi (strain ATCC 25391 / DSM 10237 / CIP 104748 / NCIMB 11846 / Nb-255).